The primary structure comprises 434 residues: Sensor histidine kinase Hik2 (434 aa).

Positions 16 to 152 (ISLCQSQVRL…EAIAKSLAVA (137 aa)) constitute a GAF domain. Cysteine 19 lines the [3Fe-4S] cluster pocket. The Histidine kinase domain maps to 182-432 (DLLHQLRNPL…TFTLWLRSGE (251 aa)). Histidine 185 carries the phosphohistidine; by autocatalysis modification. A G1 box motif is present at residues 357 to 361 (DTGYG). The G2 box signature appears at 386-390 (GTGLG).

The protein belongs to the chloroplast sensor kinase protein family. In terms of assembly, exists as monomers, tetramers, hexamers and other higher-order oligomers; all are able to autophosphorylate. Upon treatment with 0.5 M NaCl only tetramers are seen, which are probably inactive. Interacts with both RppA and Rre1. Requires [3Fe-4S] cluster as cofactor. Post-translationally, autophosphorylates, probably on His-185.

The protein resides in the cytoplasm. It catalyses the reaction ATP + protein L-histidine = ADP + protein N-phospho-L-histidine.. With respect to regulation, autophosphorylation is inhibited by Na(+) but not by Cl(-). Reducing agents dithionite, duroquinol and decyl-plastoquinone, but not NADPH or ferredoxin inhibit autophosphorylation. Oxidation of the Fe-S cluster (with potassium ferricyanide) induces a conformational change that is conducive to its autophosphorylation activity. Its function is as follows. Member of possibly 2 two-component regulatory system(s) Hik2/Rre1 and Hik2/RppA. Transduces PQ (plastoquinone) redox signals to photosystem gene expression machinery during the adjustment of photosystem stoichiometry. Reduced PQ suppresses its autophosphorylation activity (i.e. kinase activity is higher under oxidizing conditions). Member of two-component regulatory system Hik2/Rre1, controls expression of sigB (sll0306), sll0528, slr1119, slr0852 and ssr3188 in response to hyperosmotic stress. Activity responds to high salt (with a linear response as concentrations rise to 0.5 M NaCl); detects Cl(-) levels. Autophosphorylates and transfers phosphate to Rre1. May transfer phosphate to RppA in a possible Hik2/RppA two-component system. The protein is Sensor histidine kinase Hik2 of Synechocystis sp. (strain ATCC 27184 / PCC 6803 / Kazusa).